The sequence spans 285 residues: Transcription factor E2F6 (285 aa).

Residue lysine 9 forms a Glycyl lysine isopeptide (Lys-Gly) (interchain with G-Cter in SUMO2) linkage. The DNA-binding element occupies 50–129; that stretch reads YVSMRKALKV…SKNHIRWIGS (80 aa). The DEF box signature appears at 95–129; sequence KLGVRKRRVYDITNVLDGIDLVEKKSKNHIRWIGS. A dimerization region spans residues 130–222; that stretch reads DLSNFGAVPQ…PAPKEDSITV (93 aa). A leucine-zipper region spans residues 143–164; that stretch reads LQEELSDLSAMEDALDELIKDC. Residues 173–285 are transcription repression; sequence DDKENERLAY…QSEEVLEVSN (113 aa). Residues 240–285 are disordered; sequence QGSHSSNKTSDNVGTSSSKSKPLEHPQPEKEENPPQQSEEVLEVSN. A compositionally biased stretch (polar residues) spans 241–259; it reads GSHSSNKTSDNVGTSSSKS. Over residues 260–272 the composition is skewed to basic and acidic residues; that stretch reads KPLEHPQPEKEEN.

The protein belongs to the E2F/DP family. Forms heterodimers with DP family members TFDP1 or TFDP2. Component of the DRTF1/E2F transcription factor complex. Part of the E2F6.com-1 complex in G0 phase composed of E2F6, MGA, MAX, TFDP1, CBX3, BAT8, EUHMTASE1, RING1, RNF2, MBLR, L3MBTL2 and YAF2. Component of some MLL1/MLL complex, at least composed of the core components KMT2A/MLL1, ASH2L, HCFC1/HCF1, WDR5 and RBBP5, as well as the facultative components BACC1, CHD8, E2F6, HSP70, INO80C, KANSL1, LAS1L, MAX, MCRS1, MGA, KAT8/MOF, PELP1, PHF20, PRP31, RING2, RUVB1/TIP49A, RUVB2/TIP49B, SENP3, TAF1, TAF4, TAF6, TAF7, TAF9 and TEX10.

The protein localises to the nucleus. Inhibitor of E2F-dependent transcription. Binds DNA cooperatively with DP proteins through the E2 recognition site, 5'-TTTC[CG]CGC-3'. Has a preference for the 5'-TTTCCCGC-3' E2F recognition site. E2F6 lacks the transcriptional activation and pocket protein binding domains. Appears to regulate a subset of E2F-dependent genes whose products are required for entry into the cell cycle but not for normal cell cycle progression. Represses expression of some meiosis-specific genes, including SLC25A31/ANT4. May silence expression via the recruitment of a chromatin remodeling complex containing histone H3-K9 methyltransferase activity. Overexpression delays the exit of cells from the S-phase. The chain is Transcription factor E2F6 from Bos taurus (Bovine).